Reading from the N-terminus, the 141-residue chain is Large ribosomal subunit protein uL11B (141 aa).

This sequence belongs to the universal ribosomal protein uL11 family. As to quaternary structure, part of the ribosomal stalk of the 50S ribosomal subunit. Interacts with L10 and the large rRNA to form the base of the stalk. L10 forms an elongated spine to which L12 dimers bind in a sequential fashion forming a multimeric L10(L12)X complex. In terms of processing, one or more lysine residues are methylated.

Forms part of the ribosomal stalk which helps the ribosome interact with GTP-bound translation factors. The sequence is that of Large ribosomal subunit protein uL11B from Halalkalibacterium halodurans (strain ATCC BAA-125 / DSM 18197 / FERM 7344 / JCM 9153 / C-125) (Bacillus halodurans).